A 199-amino-acid polypeptide reads, in one-letter code: Recombination protein RecR (199 aa).

A C4-type zinc finger spans residues 57-72 (CPICGNITEKEICDIC). The region spanning 80–176 (TTIMVVEQPK…KVTRLAAGLS (97 aa)) is the Toprim domain.

It belongs to the RecR family.

Functionally, may play a role in DNA repair. It seems to be involved in an RecBC-independent recombinational process of DNA repair. It may act with RecF and RecO. This Lactobacillus acidophilus (strain ATCC 700396 / NCK56 / N2 / NCFM) protein is Recombination protein RecR.